The sequence spans 368 residues: Probable auxin efflux carrier component 5b (368 aa).

The next 10 membrane-spanning stretches (helical) occupy residues 7 to 27, 39 to 59, 71 to 91, 114 to 134, 145 to 165, 227 to 247, 251 to 271, 286 to 306, 312 to 332, and 347 to 367; these read VYKV…GYGS, CDAV…FDFA, VLAA…ACAA, CITG…VPLL, LIVQ…LLAF, VLGV…PSII, VLIM…LFMA, LGMA…AFAL, LLRL…FVFA, and IFGT…LGFI.

The protein belongs to the auxin efflux carrier (TC 2.A.69.1) family. In terms of tissue distribution, expressed at low levels in roots and shoot apex.

It localises to the membrane. Its function is as follows. May act as a component of the auxin efflux carrier. In Oryza sativa subsp. japonica (Rice), this protein is Probable auxin efflux carrier component 5b.